The chain runs to 113 residues: Mitochondrial zinc maintenance protein 1, mitochondrial (113 aa).

The protein belongs to the complex I LYR family. MZM1 subfamily. Interacts with RIP1.

Its subcellular location is the mitochondrion matrix. In terms of biological role, assembly factor required for Rieske Fe-S protein RIP1 incorporation into the cytochrome b-c1 (CIII) complex. Functions as a chaperone, binding to this subunit within the mitochondrial matrix and stabilizing it prior to its translocation and insertion into the late CIII dimeric intermediate within the mitochondrial inner membrane. Modulates the mitochondrial matrix zinc pool. In Talaromyces stipitatus (strain ATCC 10500 / CBS 375.48 / QM 6759 / NRRL 1006) (Penicillium stipitatum), this protein is Mitochondrial zinc maintenance protein 1, mitochondrial (MZM1).